We begin with the raw amino-acid sequence, 192 residues long: Type 1 phosphatases regulator YPI2 (192 aa).

2 disordered regions span residues 1 to 53 (MLQR…GKHK) and 65 to 192 (EFGQ…PVQK). Low complexity predominate over residues 8–18 (QTSSSTQTETT). Over residues 25–49 (RRPETRQKEDSKVKWTEDVIDNEHM) the composition is skewed to basic and acidic residues. Positions 69–79 (SSDESSDSSSD) are enriched in low complexity. Residues 86–103 (YERNNDFDQNHRHSHNFD) show a composition bias toward basic and acidic residues. A compositionally biased stretch (polar residues) spans 134-148 (KGNTGMSKPSSSSPD). Basic residues predominate over residues 157 to 169 (IHKRNKKVRKPKR).

It belongs to the YPI1 family.

It is found in the nucleus. Its function is as follows. Regulator of type 1 phosphatases which maintains protein phosphatase activity under strict control. This is Type 1 phosphatases regulator YPI2 (YPI2) from Scheffersomyces stipitis (strain ATCC 58785 / CBS 6054 / NBRC 10063 / NRRL Y-11545) (Yeast).